We begin with the raw amino-acid sequence, 206 residues long: Small ribosomal subunit protein uS4 (206 aa).

Residues serine 96–alanine 157 form the S4 RNA-binding domain.

It belongs to the universal ribosomal protein uS4 family. As to quaternary structure, part of the 30S ribosomal subunit. Contacts protein S5. The interaction surface between S4 and S5 is involved in control of translational fidelity.

Functionally, one of the primary rRNA binding proteins, it binds directly to 16S rRNA where it nucleates assembly of the body of the 30S subunit. In terms of biological role, with S5 and S12 plays an important role in translational accuracy. The chain is Small ribosomal subunit protein uS4 from Alkalilimnicola ehrlichii (strain ATCC BAA-1101 / DSM 17681 / MLHE-1).